The sequence spans 316 residues: Olfactory receptor 12D3 (316 aa).

At 1–23 the chain is on the extracellular side; sequence MENVTTMNEFLLLGLTGVQELQP. Asparagine 3 carries N-linked (GlcNAc...) asparagine glycosylation. The helical transmembrane segment at 24-44 threads the bilayer; the sequence is FFFGIFLIIYLINLIGNGSIL. At 45 to 52 the chain is on the cytoplasmic side; the sequence is VMVVLEPQ. A helical transmembrane segment spans residues 53-73; the sequence is LHSPMYFFLGNLSCLDISYSS. At 74–97 the chain is on the extracellular side; the sequence is VTLPKLLVNLVCSRRAISFLGCIT. Cysteine 95 and cysteine 187 are oxidised to a cystine. The helical transmembrane segment at 98 to 118 threads the bilayer; the sequence is QLHFFHFLGSTEAILLAIMAF. Topologically, residues 119–137 are cytoplasmic; it reads DRFVAICNPLRYTVIMNPQ. The helical transmembrane segment at 138–158 threads the bilayer; the sequence is VCILLAAAAWLISFFYALMHS. Residues 159-195 are Extracellular-facing; it reads VMTAHLSFCGSQKLNHFFYDVKPLLELACSDTLLNQW. Residues 196–215 traverse the membrane as a helical segment; sequence LLSIVTGSISMGAFFLTLLS. Residues 216 to 236 are Cytoplasmic-facing; sequence CFYVIGFLLFKNRSCRILHKA. Residues 237–257 form a helical membrane-spanning segment; that stretch reads LSTCASHFMVVCLFYGPVGFT. Topologically, residues 258 to 270 are extracellular; it reads YIRPASATSMIQD. Residues 271–291 traverse the membrane as a helical segment; the sequence is RIMAIMYSAVTPVLNPLIYTL. Over 292–316 the chain is Cytoplasmic; it reads RNKEVMMALKKIFGRKLFKDWQQHH.

It belongs to the G-protein coupled receptor 1 family.

Its subcellular location is the cell membrane. In terms of biological role, odorant receptor. In Homo sapiens (Human), this protein is Olfactory receptor 12D3 (OR12D3).